We begin with the raw amino-acid sequence, 443 residues long: Threonine/serine transporter TdcC (443 aa).

The next 11 helical transmembrane spans lie at 22 to 42, 44 to 64, 97 to 117, 140 to 160, 163 to 183, 207 to 227, 259 to 279, 319 to 339, 366 to 386, 389 to 409, and 423 to 443; these read TTWTLGLFGTAIGAGVLFFPI, AGFGGLIPILLMLVLAYPIAF, GVVITFLYFFAICPLLWIYGV, VVALFLLLLMAFVIWFGKDLM, VMSYLVWPFIASLVLISLSLI, ILVTVWLGISIMVFSFNFSPI, ASMLMVAVVMFFAFSCLFTLS, ASIIALVAIFKSFFGHYLGTL, ISMIFIMGSTWIVAYANPNIL, IEAMGAPIIASLLCLLPMYAI, and DNVFVTLIGLLTILNIVYKLF.

This sequence belongs to the amino acid/polyamine transporter 2 family. SdaC/TdcC subfamily.

The protein resides in the cell inner membrane. It carries out the reaction L-threonine(in) + H(+)(in) = L-threonine(out) + H(+)(out). It catalyses the reaction L-serine(in) + H(+)(in) = L-serine(out) + H(+)(out). Its function is as follows. Involved in the import of threonine and serine into the cell, with the concomitant import of a proton (symport system). The sequence is that of Threonine/serine transporter TdcC from Salmonella arizonae (strain ATCC BAA-731 / CDC346-86 / RSK2980).